The following is a 172-amino-acid chain: Large ribosomal subunit protein uL10 (172 aa).

It belongs to the universal ribosomal protein uL10 family. Part of the ribosomal stalk of the 50S ribosomal subunit. The N-terminus interacts with L11 and the large rRNA to form the base of the stalk. The C-terminus forms an elongated spine to which L12 dimers bind in a sequential fashion forming a multimeric L10(L12)X complex.

Functionally, forms part of the ribosomal stalk, playing a central role in the interaction of the ribosome with GTP-bound translation factors. The sequence is that of Large ribosomal subunit protein uL10 from Francisella philomiragia subsp. philomiragia (strain ATCC 25017 / CCUG 19701 / FSC 153 / O#319-036).